The sequence spans 286 residues: 2-hydroxy-6-oxo-6-phenylhexa-2,4-dienoate hydrolase (286 aa).

Residues 42–43 (GG), N51, N111, S180, and R190 contribute to the substrate site. H265 functions as the Proton acceptor in the catalytic mechanism. W266 contacts substrate.

This sequence belongs to the AB hydrolase superfamily. BphD family. In terms of assembly, homodimer.

The catalysed reaction is 2,6-dioxo-6-phenylhexa-3-enoate + H2O = 2-oxopent-4-enoate + benzoate + H(+). Its pathway is xenobiotic degradation; biphenyl degradation; 2-hydroxy-2,4-pentadienoate and benzoate from biphenyl: step 4/4. In terms of biological role, catalyzes an unusual C-C bond hydrolysis of 2-hydroxy-6-oxo-6-phenylhexa-2,4-dienoic acid (HOPDA) to produce benzoic acid and 2-hydroxy-2,4-pentadienoic acid (HPD). In Polaromonas naphthalenivorans (strain CJ2), this protein is 2-hydroxy-6-oxo-6-phenylhexa-2,4-dienoate hydrolase.